Reading from the N-terminus, the 158-residue chain is Snaclec coagulation factor X-activating enzyme light chain 2 (158 aa).

The N-terminal stretch at 1–23 (MGRSISVSFGLLAVFLSLSGTGA) is a signal peptide. Intrachain disulfides connect cysteine 27/cysteine 38, cysteine 55/cysteine 152, and cysteine 127/cysteine 144. The C-type lectin domain maps to 34-153 (YRYFCYRVFK…CEEPYPFVCK (120 aa)).

This sequence belongs to the snaclec family. As to quaternary structure, heterotrimer; disulfide-linked. The heterotrimer consists of 1 heavy chain (a metalloproteinase) and 2 light chains: LC1 and LC2. As to expression, expressed by the venom gland.

It is found in the secreted. Functionally, regulatory subunit of the blood coagulation factor X-activating enzyme. Activates coagulation factor X (F10) by cleaving the Arg-Ile bond at position 234, activates coagulation factor IX (F9) by cleaving the Arg-Val bond at position 226 and is also able to activate protein C (PROC). May serve as an exosite by which the enzyme recognizes and binds to the Gla domain of factor X (F10) in a calcium-dependent manner. This chain is Snaclec coagulation factor X-activating enzyme light chain 2 (LC2), found in Macrovipera lebetinus (Levantine viper).